A 215-amino-acid chain; its full sequence is Chaperone protein TorD (215 aa).

The protein belongs to the TorD/DmsD family. TorD subfamily.

Its subcellular location is the cytoplasm. Functionally, involved in the biogenesis of TorA. Acts on TorA before the insertion of the molybdenum cofactor and, as a result, probably favors a conformation of the apoenzyme that is competent for acquiring the cofactor. The sequence is that of Chaperone protein TorD from Vibrio vulnificus (strain YJ016).